The chain runs to 385 residues: Fe-S cluster assembly protein DRE2 (385 aa).

The interval 1–177 (MTSSINILLL…KKLNKNDMTI (177 aa)) is N-terminal SAM-like domain. Residues 178-240 (NVPQEIDNIT…NDLLKYNNHN (63 aa)) are linker. A disordered region spans residues 200–226 (YFSSDDENSSDGSLSDNANEEEEDDDE). A compositionally biased stretch (acidic residues) spans 217–226 (ANEEEEDDDE). [2Fe-2S] cluster is bound by residues C261, C275, C278, and C280. Positions 261-280 (CELSLNGGKKRKKACKDCTC) are fe-S binding site A. Residues C348, C351, C359, and C362 each contribute to the [4Fe-4S] cluster site. 2 consecutive short sequence motifs (cx2C motif) follow at residues 348–351 (CGSC) and 359–362 (CDGC). Positions 348–362 (CGSCALGDAFRCDGC) are fe-S binding site B.

It belongs to the anamorsin family. Monomer. Interacts with TAH18. Interacts with MIA40. It depends on [2Fe-2S] cluster as a cofactor. The cofactor is [4Fe-4S] cluster.

Its subcellular location is the cytoplasm. It is found in the mitochondrion intermembrane space. Functionally, component of the cytosolic iron-sulfur (Fe-S) protein assembly (CIA) machinery required for the maturation of extramitochondrial Fe-S proteins. Part of an electron transfer chain functioning in an early step of cytosolic Fe-S biogenesis, facilitating the de novo assembly of a [4Fe-4S] cluster on the scaffold complex CFD1-NBP35. Electrons are transferred to DRE2 from NADPH via the FAD- and FMN-containing protein TAH18. TAH18-DRE2 are also required for the assembly of the diferric tyrosyl radical cofactor of ribonucleotide reductase (RNR), probably by providing electrons for reduction during radical cofactor maturation in the catalytic small subunit RNR2. The protein is Fe-S cluster assembly protein DRE2 of Candida dubliniensis (strain CD36 / ATCC MYA-646 / CBS 7987 / NCPF 3949 / NRRL Y-17841) (Yeast).